The following is a 389-amino-acid chain: Probable peptide chain release factor 1, mitochondrial (389 aa).

Residue Q259 is modified to N5-methylglutamine.

The protein belongs to the prokaryotic/mitochondrial release factor family. In terms of processing, methylation of glutamine in the GGQ triplet is conserved from bacteria to mammals.

The protein resides in the mitochondrion. Functionally, mitochondrial peptide chain release factor that directs the termination of translation in response to the peptide chain termination codons UAA and UAG. In Caenorhabditis elegans, this protein is Probable peptide chain release factor 1, mitochondrial.